A 638-amino-acid polypeptide reads, in one-letter code: Paramyosin (638 aa).

The stretch at 1–638 (FSPSTTRLES…EGDISVMQAD (638 aa)) forms a coiled coil.

The protein belongs to the paramyosin family. In terms of assembly, homodimer.

It is found in the cytoplasm. The protein resides in the myofibril. Functionally, paramyosin is a major structural component of many thick filaments isolated from invertebrate muscles. The protein is Paramyosin of Opisthorchis felineus.